Consider the following 511-residue polypeptide: Cytochrome P450 monooxyhenase eriC (511 aa).

Residues 2–22 traverse the membrane as a helical segment; that stretch reads VLADFISIPTVSIACLAVLGI. Heme is bound at residue Cys445.

The protein belongs to the cytochrome P450 family. It depends on heme as a cofactor.

It localises to the membrane. The enzyme catalyses erinacol + reduced [NADPH--hemoprotein reductase] + O2 = cyathadiol + oxidized [NADPH--hemoprotein reductase] + H2O + H(+). The protein operates within secondary metabolite biosynthesis. Its function is as follows. Cytochrome P450 monooxygenase; part of the gene cluster that mediates the biosynthesis of erinacines, cyathane-xylosides that show unique biological activities, including leishmanicidal activity, stimulating activity for nerve growth-factor synthesis, and agonistic activity toward the kappa opioid receptor. Within the pathway, eriC hydroxylates erinacol at C-15 of the seven-membered ring to yield cyathadiol. The first step of the erinacines biosynthesis pathway is catalyzed by the geranylgeranyl diphosphate (GGPP) synthase eriE via conversion of farnesyl pyrophosphate and isopentyl pyrophosphate into geranylgeranyl pyrophosphate (GGPP). GGPP is then substrate of the diterpene cyclase eriG for the production of cyatha-3,12-diene. The cytochrome P450 monooxygenase eriI then hydroxylates cyatha-3,12-diene at C-14 of the seven-membered ring to produce erinacol, which is further hydroxylated at C-15 by the cytochrome P450 monooxygenase eriC to yield cyathadiol. The cytochrome P450 monooxygenase eriA then catalyzes C-11 hydroxylation in the presence of the short chain dehydrogenase/reductase (SDR) eriH, which leads to the production of cyathatriol. The acetyltransferase eriL converts cyathatriol into 11-O-acetyl-cyathatriol. The SDR eriH catalyzes further oxidation of 11-O-acetyl-cyathatriol into 1-O-acetylcyathin A3. Finally, the glycosyl transferase eriJ tranfers xylose from UDP-xylose onto C-14 of 11-O-acetyl-cyathatriol to form eracine Q. EriJ is also able to convert 11-O-acetyl-cyathatriol to eracine Q2 by using UDP-D-glucose as cosubstrate, but at a lower rate. The polypeptide is Cytochrome P450 monooxyhenase eriC (Hericium erinaceus (Lion's mane mushroom)).